The chain runs to 337 residues: uncharacterized protein (337 aa).

An ABC transporter domain is found at 5 to 235 (VEFDNVSRLY…PRTPFVAGFV (231 aa)). 37 to 44 (GPSGSGKT) contacts ATP.

The protein belongs to the ABC transporter superfamily.

Probably part of the ABC transporter complex YdcSTUV. Probably responsible for energy coupling to the transport system. This is an uncharacterized protein from Escherichia coli (strain K12).